Consider the following 573-residue polypeptide: Arylsulfatase I (573 aa).

The signal sequence occupies residues 1–23 (MHALTGLSLVSLLSFGYLSWDWA). Residues D56, D57, and C94 each coordinate Ca(2+). Catalysis depends on C94, which acts as the Nucleophile. C94 bears the 3-oxoalanine (Cys) mark. K148 lines the substrate pocket. H150 is an active-site residue. H240 contributes to the substrate binding site. N277 and N289 each carry an N-linked (GlcNAc...) asparagine glycan. Ca(2+)-binding residues include D298 and N299. Residue K316 participates in substrate binding. N-linked (GlcNAc...) asparagine glycosylation is found at N467 and N497. Residues 516–550 (FNGGAWGPWASDEEEEEEEEEAGRARSFSRGRRKK) are disordered. A compositionally biased stretch (acidic residues) spans 526–536 (SDEEEEEEEEE).

Belongs to the sulfatase family. Ca(2+) serves as cofactor. Post-translationally, the oxidation of Cys-94 residue to 3-oxoalanine (also known as C(alpha)-formylglycine) by SUMF1/Sulfatase-modifying factor 1, seems critical for catalytic activity.

The protein localises to the secreted. The protein resides in the endoplasmic reticulum. Its function is as follows. Displays arylsulfatase activity at neutral pH, when co-expressed with SUMF1; arylsulfatase activity is measured in the secretion medium of retinal cell line, but no activity is recorded when measured in cell extracts. The chain is Arylsulfatase I (ARSI) from Canis lupus familiaris (Dog).